Reading from the N-terminus, the 143-residue chain is ATP synthase subunit b' (143 aa).

Residues Ala-6–Phe-26 form a helical membrane-spanning segment.

Belongs to the ATPase B chain family. F-type ATPases have 2 components, F(1) - the catalytic core - and F(0) - the membrane proton channel. F(1) has five subunits: alpha(3), beta(3), gamma(1), delta(1), epsilon(1). F(0) has four main subunits: a(1), b(1), b'(1) and c(10-14). The alpha and beta chains form an alternating ring which encloses part of the gamma chain. F(1) is attached to F(0) by a central stalk formed by the gamma and epsilon chains, while a peripheral stalk is formed by the delta, b and b' chains.

It localises to the cellular thylakoid membrane. In terms of biological role, f(1)F(0) ATP synthase produces ATP from ADP in the presence of a proton or sodium gradient. F-type ATPases consist of two structural domains, F(1) containing the extramembraneous catalytic core and F(0) containing the membrane proton channel, linked together by a central stalk and a peripheral stalk. During catalysis, ATP synthesis in the catalytic domain of F(1) is coupled via a rotary mechanism of the central stalk subunits to proton translocation. Its function is as follows. Component of the F(0) channel, it forms part of the peripheral stalk, linking F(1) to F(0). The b'-subunit is a diverged and duplicated form of b found in plants and photosynthetic bacteria. The polypeptide is ATP synthase subunit b' (Gloeothece citriformis (strain PCC 7424) (Cyanothece sp. (strain PCC 7424))).